The sequence spans 391 residues: Squalene synthase 8 (391 aa).

This sequence belongs to the phytoene/squalene synthase family. The cofactor is Mg(2+). Requires Mn(2+) as cofactor.

The protein localises to the endoplasmic reticulum. It catalyses the reaction 2 (2E,6E)-farnesyl diphosphate + NADH + H(+) = squalene + 2 diphosphate + NAD(+). It carries out the reaction 2 (2E,6E)-farnesyl diphosphate + NADPH + H(+) = squalene + 2 diphosphate + NADP(+). Its pathway is terpene metabolism; lanosterol biosynthesis; lanosterol from farnesyl diphosphate: step 1/3. Its function is as follows. Component of the triterpene saponins (e.g. ginsenosides or panaxosides) and phytosterols biosynthetic pathways. Catalyzes the biosynthesis of squalene. The chain is Squalene synthase 8 from Panax ginseng (Korean ginseng).